The sequence spans 116 residues: Large ribosomal subunit protein bL17 (116 aa).

The protein belongs to the bacterial ribosomal protein bL17 family. In terms of assembly, part of the 50S ribosomal subunit. Contacts protein L32.

The protein is Large ribosomal subunit protein bL17 of Prochlorococcus marinus (strain MIT 9515).